A 650-amino-acid chain; its full sequence is MGKIIGIDLGTTNSCVAIMEGNQVKVIENSEGARTTPSIIAYMDDNEVLVGAPAKRQSVTNPKNTLFAVKRLIGRRFEEKEVQKDIGLMPYSIIKADNGDAWVEAHGEKLAPPQVSAEVLRKMKKTAEDYLGEPVTEAVITVPAYFNDSQRQATKDAGRIAGLEVKRIINEPTAAALAFGLDKAEKGDRKIAVYDLGGGTFDVSIIEIADVDGEKQFEVLSTNGDTFLGGEDFDQRIIDYIIGEFKKEQGVDLSKDVLALQRLKEAAEKAKIELSSGQQTEINLPYITADASGPKHLNLKITRAKLEALVEDLVERTIEPCRIAIKDAGVKVSDIDDVILVGGQTRMPKVMEKVKEFFGKDPRRDVNPDEAVAVGAAIQGQVLSGDRKDVLLLDVTPLSLGIETLGGVMTKMINKNTTIPTKHSQVYSTADDNQGAVTIKVFQGEREMAAGNKLLGEFNLEGIPPAPRGVPQIEVTFDIDANGILHVGAKDKATGKENKITIKANSGLSEAEIEKMVKDAEANAAEDHKLRELAESRNQGDALVHSTKKALTEYGDKLEAGEKEKIEAALKELEDVLKNASSDKAAIDAKIETVATASQKLGEKMYADMQAQQAGAAGAAGAAAAEGAAQGGAQTADDVVDADFKEVKKD.

Residue T200 is modified to Phosphothreonine; by autocatalysis. Low complexity predominate over residues 613 to 634 (QAGAAGAAGAAAAEGAAQGGAQ). The segment at 613–637 (QAGAAGAAGAAAAEGAAQGGAQTAD) is disordered.

This sequence belongs to the heat shock protein 70 family.

Functionally, acts as a chaperone. This chain is Chaperone protein DnaK, found in Burkholderia thailandensis (strain ATCC 700388 / DSM 13276 / CCUG 48851 / CIP 106301 / E264).